Here is a 356-residue protein sequence, read N- to C-terminus: Protein translocase subunit SecY (356 aa).

Transmembrane regions (helical) follow at residues 24–44 (LFVI…IPGI), 77–97 (IFAL…LLTV), 125–145 (LVLA…MPGM), 154–174 (FAFY…LMWL), 183–203 (IGNG…PPAV), 217–237 (FLLL…VVFI), 274–294 (VIPA…ASWF), and 317–337 (YVLL…ALVF).

It belongs to the SecY/SEC61-alpha family. As to quaternary structure, component of the Sec protein translocase complex. Heterotrimer consisting of SecY, SecE and SecG subunits. The heterotrimers can form oligomers, although 1 heterotrimer is thought to be able to translocate proteins. Interacts with the ribosome. Interacts with SecDF, and other proteins may be involved. Interacts with SecA.

It localises to the cell membrane. Its function is as follows. The central subunit of the protein translocation channel SecYEG. Consists of two halves formed by TMs 1-5 and 6-10. These two domains form a lateral gate at the front which open onto the bilayer between TMs 2 and 7, and are clamped together by SecE at the back. The channel is closed by both a pore ring composed of hydrophobic SecY resides and a short helix (helix 2A) on the extracellular side of the membrane which forms a plug. The plug probably moves laterally to allow the channel to open. The ring and the pore may move independently. The chain is Protein translocase subunit SecY from Buchnera aphidicola subsp. Acyrthosiphon kondoi (Acyrthosiphon kondoi symbiotic bacterium).